The chain runs to 434 residues: MLPARCARLLTPHLLLVLVQLSPARGHRTTGPRFLISDRDPQCNLHCSRTQPKPICASDGRSYESMCEYQRAKCRDPTLGVVHRGRCKDAGQSKCRLERAQALEQAKKPQEAVFVPECGEDGSFTQVQCHTYTGYCWCVTPDGKPISGSSVQNKTPVCSGSVTDKPLSQGNSGRKDDGSKPTPTMETQPVFDGDEITAPTLWIKHLVIKDSKLNNTNIRNSEKVYSCDQERQSALEEAQQNPREGIVIPECAPGGLYKPVQCHQSTGYCWCVLVDTGRPLPGTSTRYVMPSCESDARAKTTEADDPFKDRELPGCPEGKKMEFITSLLDALTTDMVQAINSAAPTGGGRFSEPDPSHTLEERVVHWYFSQLDSNSSNDINKREMKPFKRYVKKKAKPKKCARRFTDYCDLNKDKVISLPELKGCLGVSKEGRLV.

Positions M1–G26 are cleaved as a signal peptide. The Kazal-like domain maps to S37–D89. Cystine bridges form between C43/C74, C47/C67, C56/C87, C95/C118, C129/C136, and C138/C158. The 67-residue stretch at Q92–C158 folds into the Thyroglobulin type-1 1 domain. The segment covering S149–S172 has biased composition (polar residues). Residues S149 to F191 are disordered. N-linked (GlcNAc...) asparagine glycosylation occurs at N214. The Thyroglobulin type-1 2 domain occupies V224 to C292. 3 cysteine pairs are disulfide-bonded: C227-C251, C262-C269, and C271-C292. EF-hand domains are found at residues L359–K394 and K396–G431. Ca(2+) contacts are provided by D372, N374, S376, D378, E383, D409, N411, D413, and E420. N-linked (GlcNAc...) asparagine glycosylation occurs at N374.

Glycosylated. Widely expressed in many tissues with a strongest signal in ovary. No expression in spleen.

Its subcellular location is the secreted. It is found in the extracellular space. The protein localises to the extracellular matrix. It localises to the basement membrane. Functionally, plays essential roles in both eye and limb development. Probable regulator of osteoblast differentiation. This chain is SPARC-related modular calcium-binding protein 1 (SMOC1), found in Homo sapiens (Human).